A 227-amino-acid polypeptide reads, in one-letter code: NAD(P)H-quinone oxidoreductase subunit K, chloroplastic (227 aa).

[4Fe-4S] cluster contacts are provided by Cys43, Cys44, Cys108, and Cys139. A compositionally biased stretch (polar residues) spans 173–192 (RSFTTNHKFQVGRSSHTGNY). The interval 173-201 (RSFTTNHKFQVGRSSHTGNYDQGFLSKPP) is disordered.

This sequence belongs to the complex I 20 kDa subunit family. NDH is composed of at least 16 different subunits, 5 of which are encoded in the nucleus. It depends on [4Fe-4S] cluster as a cofactor.

Its subcellular location is the plastid. The protein resides in the chloroplast thylakoid membrane. It carries out the reaction a plastoquinone + NADH + (n+1) H(+)(in) = a plastoquinol + NAD(+) + n H(+)(out). The catalysed reaction is a plastoquinone + NADPH + (n+1) H(+)(in) = a plastoquinol + NADP(+) + n H(+)(out). Its function is as follows. NDH shuttles electrons from NAD(P)H:plastoquinone, via FMN and iron-sulfur (Fe-S) centers, to quinones in the photosynthetic chain and possibly in a chloroplast respiratory chain. The immediate electron acceptor for the enzyme in this species is believed to be plastoquinone. Couples the redox reaction to proton translocation, and thus conserves the redox energy in a proton gradient. This is NAD(P)H-quinone oxidoreductase subunit K, chloroplastic from Trachelium caeruleum (Blue throatwort).